We begin with the raw amino-acid sequence, 261 residues long: Cytochrome c oxidase subunit 3 (261 aa).

Residues 1–15 (MTHQTHAYHMVNPSP) lie on the Mitochondrial matrix side of the membrane. Residues 16–34 (WPLTGAMSALLLTSGLIMW) form a helical membrane-spanning segment. At 35–40 (FHFNSY) the chain is on the mitochondrial intermembrane side. The helical transmembrane segment at 41–66 (TLLLLGLLTNLISSYQWWRDIVREGT) threads the bilayer. Residues 67–72 (YQGHHT) lie on the Mitochondrial matrix side of the membrane. A helical transmembrane segment spans residues 73 to 105 (KIVQKGLRYGMILFIISEVFFFLGFFWAFYHSS). Topologically, residues 106–128 (LAPTPELGGCWPPTGISPLNPLE) are mitochondrial intermembrane. A helical membrane pass occupies residues 129–152 (VPLLNTSILLASGVSITWAHHSLM). The Mitochondrial matrix portion of the chain corresponds to 153–155 (EGN). Residues 156 to 183 (RKQMLQALTITIALGLYFTALQAMEYYE) traverse the membrane as a helical segment. Topologically, residues 184 to 190 (ASFTISD) are mitochondrial intermembrane. The helical transmembrane segment at 191 to 223 (GVYGSTFFVATGFHGLHVIIGTTFLITCLVRQT) threads the bilayer. The Mitochondrial matrix portion of the chain corresponds to 224–232 (LYHFTSNHH). Residues 233–256 (FGFEAAAWYWHFVDVVWLFLYVSI) traverse the membrane as a helical segment. Over 257 to 261 (YWWGS) the chain is Mitochondrial intermembrane.

The protein belongs to the cytochrome c oxidase subunit 3 family. In terms of assembly, component of the cytochrome c oxidase (complex IV, CIV), a multisubunit enzyme composed of 14 subunits. The complex is composed of a catalytic core of 3 subunits MT-CO1, MT-CO2 and MT-CO3, encoded in the mitochondrial DNA, and 11 supernumerary subunits COX4I, COX5A, COX5B, COX6A, COX6B, COX6C, COX7A, COX7B, COX7C, COX8 and NDUFA4, which are encoded in the nuclear genome. The complex exists as a monomer or a dimer and forms supercomplexes (SCs) in the inner mitochondrial membrane with NADH-ubiquinone oxidoreductase (complex I, CI) and ubiquinol-cytochrome c oxidoreductase (cytochrome b-c1 complex, complex III, CIII), resulting in different assemblies (supercomplex SCI(1)III(2)IV(1) and megacomplex MCI(2)III(2)IV(2)).

It localises to the mitochondrion inner membrane. The enzyme catalyses 4 Fe(II)-[cytochrome c] + O2 + 8 H(+)(in) = 4 Fe(III)-[cytochrome c] + 2 H2O + 4 H(+)(out). Component of the cytochrome c oxidase, the last enzyme in the mitochondrial electron transport chain which drives oxidative phosphorylation. The respiratory chain contains 3 multisubunit complexes succinate dehydrogenase (complex II, CII), ubiquinol-cytochrome c oxidoreductase (cytochrome b-c1 complex, complex III, CIII) and cytochrome c oxidase (complex IV, CIV), that cooperate to transfer electrons derived from NADH and succinate to molecular oxygen, creating an electrochemical gradient over the inner membrane that drives transmembrane transport and the ATP synthase. Cytochrome c oxidase is the component of the respiratory chain that catalyzes the reduction of oxygen to water. Electrons originating from reduced cytochrome c in the intermembrane space (IMS) are transferred via the dinuclear copper A center (CU(A)) of subunit 2 and heme A of subunit 1 to the active site in subunit 1, a binuclear center (BNC) formed by heme A3 and copper B (CU(B)). The BNC reduces molecular oxygen to 2 water molecules using 4 electrons from cytochrome c in the IMS and 4 protons from the mitochondrial matrix. This is Cytochrome c oxidase subunit 3 (MT-CO3) from Ornithorhynchus anatinus (Duckbill platypus).